The sequence spans 555 residues: Protein peste (555 aa).

Over 1–7 (MTSRTRH) the chain is Cytoplasmic. Residues 8–28 (CARLGIVLLGICCIASGIYLF) traverse the membrane as a helical segment. Residues 29 to 434 (RNWIDMFTRM…VRVSEEIAAD (406 aa)) are Extracellular-facing. N-linked (GlcNAc...) asparagine glycans are attached at residues Asn-70, Asn-110, Asn-129, Asn-213, Asn-242, Asn-312, and Asn-342. Residues 435 to 455 (IALVPLIVLLGQIVTGILLAG) form a helical membrane-spanning segment. At 456-555 (GLICTCWYPT…SEDSPDVVVR (100 aa)) the chain is on the cytoplasmic side.

It belongs to the CD36 family.

The protein localises to the cell membrane. (Microbial infection) Plays a role in mycobacterial infection. Mediates infection by M.fortuitum and uptake of M.smegmatis. The sequence is that of Protein peste from Drosophila melanogaster (Fruit fly).